The following is a 59-amino-acid chain: Cecropin-A (59 aa).

A signal peptide spans 1-23 (MNFTKLFLLIAMAVLLLTGQSEA). Residues 58-59 (GK) constitute a propeptide, removed in mature form (AeaeCec2).

Hemolymph (at protein level).

It localises to the secreted. In terms of biological role, antimicrobial peptide. Antibacterial activity against Gram-negative bacteria E.coli D22 and D31, E.carotovora, K.pneumoniae, P.aeruginosa, S.typhimurium, E.cloacae B12 and X.campestris and Gram-positive bacteria A.viridans, M.luteus, B.megaterium and S.pyogenes. Possesses antifungal activity against F.oxysporum, F.culmorum and N.crassa, C.albicans, C.neoformans and S.cerevisiae. No activity against Gram-negative S.marcescens Db11, Gram-positive B.cereus, B.subtilis, B.thuringiensis, S.aureus and L.monocytogenes, the fungi A.fumigatus and B.bassiana and C.glabrata. Partially neutralizes lipopolysaccharides (LPS). Exhibits anti-inflammatory properties: inhibits LPS-induced iNOS/NOS2 transcription, nitric oxide (NO) and pro-inflammatory cytokine production in mouse macrophages and human peripheral blood mononuclear cells (PBMCs); inhibits LPS-induced activation of MAPK and NF-kappa-B signaling pathways in mouse macrophages. This is Cecropin-A (CECA) from Aedes aegypti (Yellowfever mosquito).